Consider the following 132-residue polypeptide: Small ribosomal subunit protein uS8c (132 aa).

The protein belongs to the universal ribosomal protein uS8 family. Part of the 30S ribosomal subunit.

The protein resides in the plastid. It localises to the chloroplast. In terms of biological role, one of the primary rRNA binding proteins, it binds directly to 16S rRNA central domain where it helps coordinate assembly of the platform of the 30S subunit. This chain is Small ribosomal subunit protein uS8c (rps8), found in Guillardia theta (Cryptophyte).